Reading from the N-terminus, the 226-residue chain is Phosphoglycolate phosphatase (226 aa).

The active-site Nucleophile is the Asp12. Mg(2+) contacts are provided by Asp12, Asp14, and Asp177.

This sequence belongs to the HAD-like hydrolase superfamily. CbbY/CbbZ/Gph/YieH family. The cofactor is Mg(2+).

It carries out the reaction 2-phosphoglycolate + H2O = glycolate + phosphate. It participates in organic acid metabolism; glycolate biosynthesis; glycolate from 2-phosphoglycolate: step 1/1. Functionally, specifically catalyzes the dephosphorylation of 2-phosphoglycolate. Is involved in the dissimilation of the intracellular 2-phosphoglycolate formed during the DNA repair of 3'-phosphoglycolate ends, a major class of DNA lesions induced by oxidative stress. The chain is Phosphoglycolate phosphatase from Colwellia psychrerythraea (strain 34H / ATCC BAA-681) (Vibrio psychroerythus).